The chain runs to 185 residues: Ribosome-recycling factor (185 aa).

The protein belongs to the RRF family.

It is found in the cytoplasm. Functionally, responsible for the release of ribosomes from messenger RNA at the termination of protein biosynthesis. May increase the efficiency of translation by recycling ribosomes from one round of translation to another. The polypeptide is Ribosome-recycling factor (Ehrlichia chaffeensis (strain ATCC CRL-10679 / Arkansas)).